The chain runs to 281 residues: Polyamine aminopropyltransferase (281 aa).

Positions 2-236 (DLWLKEGQIS…GYWSFTIGSK (235 aa)) constitute a PABS domain. Residue Gln-31 participates in S-methyl-5'-thioadenosine binding. Spermidine is bound by residues His-62 and Asp-86. S-methyl-5'-thioadenosine-binding positions include Glu-106 and 138–139 (DG). The Proton acceptor role is filled by Asp-156. 156-159 (DSTD) is a spermidine binding site.

This sequence belongs to the spermidine/spermine synthase family. In terms of assembly, homodimer or homotetramer.

It is found in the cytoplasm. It carries out the reaction S-adenosyl 3-(methylsulfanyl)propylamine + putrescine = S-methyl-5'-thioadenosine + spermidine + H(+). It participates in amine and polyamine biosynthesis; spermidine biosynthesis; spermidine from putrescine: step 1/1. In terms of biological role, catalyzes the irreversible transfer of a propylamine group from the amino donor S-adenosylmethioninamine (decarboxy-AdoMet) to putrescine (1,4-diaminobutane) to yield spermidine. The chain is Polyamine aminopropyltransferase from Clostridium tetani (strain Massachusetts / E88).